The following is a 287-amino-acid chain: Elongation factor Ts (287 aa).

Residues T80–L83 are involved in Mg(2+) ion dislocation from EF-Tu.

This sequence belongs to the EF-Ts family.

It is found in the cytoplasm. Functionally, associates with the EF-Tu.GDP complex and induces the exchange of GDP to GTP. It remains bound to the aminoacyl-tRNA.EF-Tu.GTP complex up to the GTP hydrolysis stage on the ribosome. The sequence is that of Elongation factor Ts from Ectopseudomonas mendocina (strain ymp) (Pseudomonas mendocina).